We begin with the raw amino-acid sequence, 657 residues long: ABC1 family protein YPL109C, mitochondrial (657 aa).

Residues 1–15 (MSFLKFAYRNSWRYY) constitute a mitochondrion transit peptide.

This sequence belongs to the protein kinase superfamily. ADCK protein kinase family.

It is found in the mitochondrion. The chain is ABC1 family protein YPL109C, mitochondrial from Saccharomyces cerevisiae (strain ATCC 204508 / S288c) (Baker's yeast).